We begin with the raw amino-acid sequence, 115 residues long: Large ribosomal subunit protein bL19 (115 aa).

This sequence belongs to the bacterial ribosomal protein bL19 family.

Its function is as follows. This protein is located at the 30S-50S ribosomal subunit interface and may play a role in the structure and function of the aminoacyl-tRNA binding site. The sequence is that of Large ribosomal subunit protein bL19 from Akkermansia muciniphila (strain ATCC BAA-835 / DSM 22959 / JCM 33894 / BCRC 81048 / CCUG 64013 / CIP 107961 / Muc).